We begin with the raw amino-acid sequence, 623 residues long: Phosphoglucomutase, chloroplastic (623 aa).

Residues 1–63 (MTSTYTRFDT…SSSSSSVVAG (63 aa)) constitute a chloroplast transit peptide. 2 residues coordinate alpha-D-glucose 1,6-bisphosphate: arginine 88 and serine 181. Serine 181 serves as the catalytic Phosphoserine intermediate. Serine 181, aspartate 346, aspartate 348, and aspartate 350 together coordinate Mg(2+). Residue serine 181 is modified to Phosphoserine. Aspartate 350, arginine 351, threonine 414, glutamate 433, serine 435, and lysine 446 together coordinate alpha-D-glucose 1,6-bisphosphate.

Belongs to the phosphohexose mutase family. In terms of assembly, monomer. It depends on Mg(2+) as a cofactor. Expressed in flowers, siliques and germinating seeds.

Its subcellular location is the plastid. The protein localises to the chloroplast. It carries out the reaction alpha-D-glucose 1-phosphate = alpha-D-glucose 6-phosphate. The catalysed reaction is O-phospho-L-seryl-[protein] + alpha-D-glucose 1-phosphate = alpha-D-glucose 1,6-bisphosphate + L-seryl-[protein]. It catalyses the reaction alpha-D-glucose 1,6-bisphosphate + L-seryl-[protein] = O-phospho-L-seryl-[protein] + alpha-D-glucose 6-phosphate. Its activity is regulated as follows. Inhibited by the Calvin cycle intermediates fructose-1,6-bisphosphate and ribulose-1,5-bisphosphate. Its function is as follows. Catalyzes the reversible isomerization of alpha-D-glucose 1-phosphate to alpha-D-glucose 6-phosphate. The mechanism proceeds via the intermediate compound alpha-D-glucose 1,6-bisphosphate. This enzyme participates in both the breakdown and synthesis of glucose. Factor that affects seed oil content. Accumulated starch in young embryos may play an important role in providing carbon resources for seed storage lipid biosynthesis in oilseed plants. Promotes gravitropic responses, negative in shoots but positive in roots, by facilitating starch granules (statoliths) formation in hypocotyls and roots columella. The chain is Phosphoglucomutase, chloroplastic from Arabidopsis thaliana (Mouse-ear cress).